A 321-amino-acid polypeptide reads, in one-letter code: uncharacterized protein (321 aa).

A run of 9 helical transmembrane segments spans residues 12 to 32 (IGVE…WAAT), 52 to 72 (LITS…AFLV), 86 to 106 (ILMS…ILII), 109 to 129 (LTGL…QQWF), 136 to 156 (FVIS…LVLA), 168 to 188 (DSLS…LFVG), 214 to 234 (WGMI…FTFL), 254 to 274 (KEIP…GLFF), and 292 to 312 (IFIC…QIFA).

The protein resides in the cell membrane. This is an uncharacterized protein from Campylobacter jejuni subsp. jejuni serotype O:2 (strain ATCC 700819 / NCTC 11168).